The chain runs to 348 residues: Protein-arginine N-acetylglucosaminyltransferase SseK2 (348 aa).

Residues Q64–F66, Y88, and Y237–A240 each bind UDP-N-acetyl-alpha-D-glucosamine. The DXD motif motif lies at D239 to D241. Mn(2+) is bound at residue D241. The active-site Proton acceptor is E271. UDP-N-acetyl-alpha-D-glucosamine is bound by residues N338, S340, and S345–R348. Positions 338 and 340 each coordinate Mn(2+).

The protein belongs to the glycosyltransferase NleB family. Requires Mn(2+) as cofactor.

Its subcellular location is the secreted. The protein resides in the host Golgi apparatus. It carries out the reaction L-arginyl-[protein] + UDP-N-acetyl-alpha-D-glucosamine = N(omega)-(N-acetyl-beta-D-glucosaminyl)-L-arginyl-[protein] + UDP + H(+). Protein-arginine N-acetylglucosaminyltransferase activity is inhibited by 100066N compound (flavone analog) and 102644N compound (a substituted isoxazole). In terms of biological role, protein-arginine N-acetylglucosaminyltransferase effector that catalyzes the transfer of a single N-acetylglucosamine (GlcNAc) to a conserved arginine residue in the death domain of host proteins such as FADD: arginine GlcNAcylation prevents homotypic/heterotypic death domain interactions. Also acts on host proteins without a death domain: catalyzes arginine GlcNAcylation of host small Rab1 GTPase, thereby preventing GTPase activity and leading to impaired host vesicular protein transport. In contrast to Ssek1, not able to disrupt TNF signaling in infected cells. This is Protein-arginine N-acetylglucosaminyltransferase SseK2 from Salmonella typhimurium (strain SL1344).